The following is a 458-amino-acid chain: Adenylosuccinate synthetase (458 aa).

GTP contacts are provided by residues 17 to 23 (GDEGKGK) and 45 to 47 (GHT). D18 acts as the Proton acceptor in catalysis. Mg(2+) is bound by residues D18 and G45. IMP is bound by residues 18-21 (DEGK), 43-46 (NAGH), T137, R151, Q247, T262, and R330. H46 acts as the Proton donor in catalysis. 326-332 (VTTGRSR) contributes to the substrate binding site. Residues R332, 358–360 (KLD), and 440–442 (STS) each bind GTP.

Belongs to the adenylosuccinate synthetase family. As to quaternary structure, homodimer. The cofactor is Mg(2+).

It is found in the cytoplasm. The catalysed reaction is IMP + L-aspartate + GTP = N(6)-(1,2-dicarboxyethyl)-AMP + GDP + phosphate + 2 H(+). It participates in purine metabolism; AMP biosynthesis via de novo pathway; AMP from IMP: step 1/2. Plays an important role in the de novo pathway of purine nucleotide biosynthesis. Catalyzes the first committed step in the biosynthesis of AMP from IMP. The chain is Adenylosuccinate synthetase from Delftia acidovorans (strain DSM 14801 / SPH-1).